The following is a 373-amino-acid chain: MSLFFLWLVSYYVGTLGTHTEIKRVAEEKVTLPCHHQLGLPEKDTLDIEWLLTDNEGNQKVVITYSSRHVYNNLTEEQKGRVAFASNFLAGDASLQIEPLKPSDEGRYTCKVKNSGRYVWSHVILKVLVRPSKPKCELEGEPTEGSDLTLQCESASGTKPIVYYWQRIREKEGEDEHLPPKSRIDYNNPGRVLLQNLTMASSGLYQCTAGNEAGKESCVVRVTVQYVQSIGMVAGAVTGIVAGALLIFLLIWLLIRRKSKDRYEEEDRPNEIREDAEAPRARLVKPSSSSSGSRSSRSGSSSTRSTGNSASRSQRTLSSEAAPQQPGLAPQAYSLIGPEVRGSEPKKVHHTTLTKAETTLSTTPSQSKAFQTV.

Positions 1 to 17 (MSLFFLWLVSYYVGTLG) are cleaved as a signal peptide. Ig-like C2-type domains are found at residues 18–126 (THTE…VILK) and 134–223 (PKCE…VRVT). The Extracellular portion of the chain corresponds to 18-234 (THTEIKRVAE…QYVQSIGMVA (217 aa)). 2 cysteine pairs are disulfide-bonded: Cys34–Cys110 and Cys152–Cys207. N-linked (GlcNAc...) asparagine glycosylation is found at Asn73 and Asn196. The chain crosses the membrane as a helical span at residues 235–255 (GAVTGIVAGALLIFLLIWLLI). Residues 256–373 (RRKSKDRYEE…PSQSKAFQTV (118 aa)) are Cytoplasmic-facing. The segment covering 263–280 (YEEEDRPNEIREDAEAPR) has biased composition (basic and acidic residues). Positions 263 to 373 (YEEEDRPNEI…PSQSKAFQTV (111 aa)) are disordered. Low complexity-rich tracts occupy residues 287 to 313 (SSSSSGSRSSRSGSSSTRSTGNSASRS), 321 to 332 (AAPQQPGLAPQA), and 353 to 363 (LTKAETTLSTT). Positions 364–373 (PSQSKAFQTV) are enriched in polar residues.

As to expression, predominantly expressed in epithelial cells within different tissues and in the white adipose tissue. Expressed at high levels in the heart and brain, at intermediate levels in the lung, skeletal muscle, kidney and testis and at low levels in the liver and spleen.

The protein localises to the cell junction. It is found in the tight junction. The protein resides in the cell membrane. May be involved in the cell-cell adhesion. May play a role in adipocyte differentiation and development of obesity. Is required for normal small intestine development. The sequence is that of CXADR-like membrane protein (Clmp) from Mus musculus (Mouse).